A 430-amino-acid chain; its full sequence is KICSTOR complex protein kaptin (430 aa).

A disordered region spans residues 410 to 430 (RKHQQGLGDRVGPRPVEHPAS). Residues 420 to 430 (VGPRPVEHPAS) are compositionally biased toward basic and acidic residues.

In terms of assembly, part of the KICSTOR complex composed of KPTN, ITFG2, KICS2 and SZT2. SZT2 probably serves as a link between the other three proteins in the KICSTOR complex and mediates the direct interaction with the GATOR1 complex. May associate with F-actin filaments.

It is found in the lysosome membrane. It localises to the cell projection. The protein localises to the lamellipodium. The protein resides in the stereocilium. In terms of biological role, as part of the KICSTOR complex functions in the amino acid-sensing branch of the TORC1 signaling pathway. Recruits, in an amino acid-independent manner, the GATOR1 complex to the lysosomal membranes and allows its interaction with GATOR2 and the RAG GTPases. Functions upstream of the RAG GTPases and is required to negatively regulate mTORC1 signaling in absence of amino acids. In absence of the KICSTOR complex mTORC1 is constitutively localized to the lysosome and activated. The KICSTOR complex is also probably involved in the regulation of mTORC1 by glucose. The sequence is that of KICSTOR complex protein kaptin from Mus musculus (Mouse).